Consider the following 248-residue polypeptide: Mannose-binding protein C (248 aa).

Residues 1 to 20 (MSLFPSLPLLLLSMVAASYS) form the signal peptide. The region spanning 42–99 (GINGFPGKDGRDGTKGEKGEPGQGLRGLQGPPGKLGPPGNPGPSGSPGPKGQKGDPGK) is the Collagen-like domain. The interval 43 to 113 (INGFPGKDGR…DSSLAASERK (71 aa)) is disordered. Hydroxyproline is present on proline 47. A compositionally biased stretch (basic and acidic residues) spans 49 to 61 (KDGRDGTKGEKGE). Hydroxyproline is present on residues proline 73, proline 79, proline 82, and proline 88. A compositionally biased stretch (pro residues) spans 75-87 (KLGPPGNPGPSGS). A compositionally biased stretch (basic and acidic residues) spans 93 to 102 (QKGDPGKSPD). Residues 112–130 (RKALQTEMARIKKWLTFSL) are a coiled coil. The region spanning 134–245 (VGNKFFLTNG…CSTSHLAVCE (112 aa)) is the C-type lectin domain. 2 disulfides stabilise this stretch: cysteine 155–cysteine 244 and cysteine 222–cysteine 236.

As to quaternary structure, oligomeric complex of 3 or more homotrimers. Interacts with MASP1 and MASP2. Interacts with MEP1A and MEP1B and may inhibit their catalytic activity. Interacts with CR1 (via Sushi 24 and Sushi 25 domains). (Microbial infection) Interacts with SARS coronavirus-2/SARS-CoV-2 Spike glycoprotein homotrimer; the interaction is calcium-dependent and modulated by Spike glycoprotein glycosylation state. Plasma protein produced mainly in the liver.

The protein localises to the secreted. In terms of biological role, calcium-dependent lectin involved in innate immune defense. Binds mannose, fucose and N-acetylglucosamine on different microorganisms and activates the lectin complement pathway. Binds to late apoptotic cells, as well as to apoptotic blebs and to necrotic cells, but not to early apoptotic cells, facilitating their uptake by macrophages. May bind DNA. Upon SARS coronavirus-2/SARS-CoV-2 infection, activates the complement lectin pathway which leads to the inhibition SARS-CoV-2 infection and a reduction of the induced inflammatory response. In Homo sapiens (Human), this protein is Mannose-binding protein C.